The following is a 405-amino-acid chain: Magnesium-protoporphyrin IX monomethyl ester [oxidative] cyclase, chloroplastic (405 aa).

The N-terminal 43 residues, 1-43 (MATEMALVKPISKFSTSSPIFSNSRYGKFTTVRMSSTSQSTTK), are a transit peptide targeting the chloroplast.

The protein belongs to the AcsF family. It depends on Fe cation as a cofactor.

It is found in the plastid. It localises to the chloroplast. It catalyses the reaction Mg-protoporphyrin IX 13-monomethyl ester + 3 NADPH + 3 O2 + 2 H(+) = 3,8-divinyl protochlorophyllide a + 3 NADP(+) + 5 H2O. Its pathway is porphyrin-containing compound metabolism; chlorophyll biosynthesis. Catalyzes the formation of the isocyclic ring in chlorophyll biosynthesis. Mediates the cyclase reaction, which results in the formation of divinylprotochlorophyllide (Pchlide) characteristic of all chlorophylls from magnesium-protoporphyrin IX 13-monomethyl ester (MgPMME). The chain is Magnesium-protoporphyrin IX monomethyl ester [oxidative] cyclase, chloroplastic (CRD1) from Gossypium hirsutum (Upland cotton).